Reading from the N-terminus, the 642-residue chain is 1,4-alpha-glucan branching enzyme GlgB (642 aa).

D304 serves as the catalytic Nucleophile. The active-site Proton donor is E355.

The protein belongs to the glycosyl hydrolase 13 family. GlgB subfamily. Monomer.

The enzyme catalyses Transfers a segment of a (1-&gt;4)-alpha-D-glucan chain to a primary hydroxy group in a similar glucan chain.. The protein operates within glycan biosynthesis; glycogen biosynthesis. Functionally, catalyzes the formation of the alpha-1,6-glucosidic linkages in glycogen by scission of a 1,4-alpha-linked oligosaccharide from growing alpha-1,4-glucan chains and the subsequent attachment of the oligosaccharide to the alpha-1,6 position. The protein is 1,4-alpha-glucan branching enzyme GlgB of Streptococcus pneumoniae serotype 4 (strain ATCC BAA-334 / TIGR4).